The chain runs to 245 residues: UDP-N-acetyl-D-mannosaminuronic acid transferase (245 aa).

It belongs to the glycosyltransferase 26 family.

The catalysed reaction is UDP-N-acetyl-alpha-D-mannosaminouronate + N-acetyl-alpha-D-glucosaminyl-di-trans,octa-cis-undecaprenyl diphosphate = beta-D-ManNAcA-(1-&gt;4)-alpha-D-GlcNAc-di-trans,octa-cis-undecaprenyl diphosphate + UDP + H(+). It participates in bacterial outer membrane biogenesis; enterobacterial common antigen biosynthesis. In terms of biological role, catalyzes the synthesis of Und-PP-GlcNAc-ManNAcA (Lipid II), the second lipid-linked intermediate involved in enterobacterial common antigen (ECA) synthesis. The sequence is that of UDP-N-acetyl-D-mannosaminuronic acid transferase from Proteus mirabilis (strain HI4320).